The primary structure comprises 435 residues: Citrate synthase (435 aa).

Active-site residues include H311 and D370.

Belongs to the citrate synthase family.

The catalysed reaction is oxaloacetate + acetyl-CoA + H2O = citrate + CoA + H(+). Its pathway is carbohydrate metabolism; tricarboxylic acid cycle; isocitrate from oxaloacetate: step 1/2. The sequence is that of Citrate synthase (gltA) from Rickettsia slovaca (strain 13-B).